The sequence spans 312 residues: Glyoxylate/hydroxypyruvate reductase A (312 aa).

Arg227 is an active-site residue. The active-site Proton donor is the His275.

It belongs to the D-isomer specific 2-hydroxyacid dehydrogenase family. GhrA subfamily.

The protein localises to the cytoplasm. The catalysed reaction is glycolate + NADP(+) = glyoxylate + NADPH + H(+). The enzyme catalyses (R)-glycerate + NAD(+) = 3-hydroxypyruvate + NADH + H(+). It carries out the reaction (R)-glycerate + NADP(+) = 3-hydroxypyruvate + NADPH + H(+). Functionally, catalyzes the NADPH-dependent reduction of glyoxylate and hydroxypyruvate into glycolate and glycerate, respectively. The sequence is that of Glyoxylate/hydroxypyruvate reductase A from Salmonella heidelberg (strain SL476).